We begin with the raw amino-acid sequence, 703 residues long: Protein O-mannosyl-transferase TMEM260 (703 aa).

The next 8 membrane-spanning stretches (helical) occupy residues 20-40, 68-88, 90-110, 137-157, 182-202, 218-238, 314-334, and 352-372; these read GALR…TLTL, PLFT…SVAY, VNLL…YTVF, IAAE…ALTV, SLCN…WILF, LTLA…SSYL, KSSV…FFAW, and FWLQ…ATLV. Asn403 and Asn564 each carry an N-linked (GlcNAc...) asparagine glycan.

This sequence belongs to the glycosyltransferase 117 (GT117) family.

The protein localises to the endoplasmic reticulum membrane. The enzyme catalyses a di-trans,poly-cis-dolichyl beta-D-mannosyl phosphate + L-seryl-[protein] = 3-O-(alpha-D-mannosyl)-L-seryl-[protein] + a di-trans,poly-cis-dolichyl phosphate + H(+). It catalyses the reaction a di-trans,poly-cis-dolichyl beta-D-mannosyl phosphate + L-threonyl-[protein] = 3-O-(alpha-D-mannosyl)-L-threonyl-[protein] + a di-trans,poly-cis-dolichyl phosphate + H(+). In terms of biological role, O-mannosyl-transferase that transfers mannosyl residues to the hydroxyl group of serine or threonine residues of proteins. Specifically glycosylates the IPT/TIG domain of target proteins, such as MET and MST1R/RON. TMEM260-mediated O-mannosylated residues are composed of single mannose glycans that are not elongated or modified. In Mus musculus (Mouse), this protein is Protein O-mannosyl-transferase TMEM260.